The chain runs to 812 residues: MKFTLSWLKDHLDTDEPLEKLADKLTMIGLEVEHIADKSKTFAPFTIARVVSAVQHPNADRLRVCMVDTGETSDKGDPSYIQVVCGAPNAREGLISVFAPPGTHIPGKNITLGVGTIRGVESRGMLCSAAELEISDDHDGIIELPADAPVGAGYAEWAGLGDPVIEINLTPNRQDCTGVHGIARDLSAADMGRFKDPTIKPVTGEFPCPVKVTVEDASLCPGFALRMVRGVKNGPSPEWLQKRLTSIGLRPINALVDITNFMTYDRARPLHVFDAKKVHGDLTIRRARDGETLKALDGRIYTLDPNVCVIADDKGVESLAGIMGGEETGCDETTTDVLIESALWSEINIAQTGRRLGINSDARYRFERGVDPAFMVPGLEMATRLVMELCGGSPSENVVAGQALPEDRVIDFPLSEIKRLAAIDVPLVEVRRILGHLGFMVAGSGPVVKVAIPTWRTDVQGKADLVEEIVRIVGVDKVPMTPFDRGEAPRKPVLTSIQSRTRKARRALAARGMVEAVNWSFISRTQAELFGGGSSELALANPIASDLSDMRPSLLPGLVAIAQANADRGFADVALFEVGQIFRGDGPQDQFMAAAGLRRGIASSAGLGRHWSGSATANALDAKADAFAVLAAAGAPAAALQIATSHESKNFPAWLHPGRSAAIQIGPHNVLGYFGELHPRVLDELKAEGPLLGFEVILDRIPEAKQKPTRAKPVLELPAFQPVSRDFAFIVDRTVKAADIVRAAQNVDRKLVSGVTVFDIYEGKGIDADKKSVAIAVRLQPRDRTFTDQEIEAVAGKIVAEVAKRTGGSLRG.

Residues 39–155 (SKTFAPFTIA…ADAPVGAGYA (117 aa)) form the tRNA-binding domain. The B5 domain maps to 405 to 480 (PEDRVIDFPL…RIVGVDKVPM (76 aa)). Residues aspartate 458, aspartate 464, glutamate 467, and glutamate 468 each coordinate Mg(2+). One can recognise an FDX-ACB domain in the interval 718–811 (PAFQPVSRDF…VAKRTGGSLR (94 aa)).

The protein belongs to the phenylalanyl-tRNA synthetase beta subunit family. Type 1 subfamily. Tetramer of two alpha and two beta subunits. Mg(2+) is required as a cofactor.

The protein resides in the cytoplasm. The enzyme catalyses tRNA(Phe) + L-phenylalanine + ATP = L-phenylalanyl-tRNA(Phe) + AMP + diphosphate + H(+). The sequence is that of Phenylalanine--tRNA ligase beta subunit from Nitrobacter winogradskyi (strain ATCC 25391 / DSM 10237 / CIP 104748 / NCIMB 11846 / Nb-255).